The following is a 372-amino-acid chain: Putative KilA-N domain-containing protein L32 (372 aa).

The segment covering 1-12 (MPHKAPKSKLFR) has biased composition (basic residues). Residues 1–129 (MPHKAPKSKL…SDNDKSKDNF (129 aa)) form a disordered region. The span at 14 to 36 (RYVEDSDDETRGRSRNRSVEKSR) shows a compositional bias: basic and acidic residues. Basic residues predominate over residues 37–53 (SKSLTRSKSKSPKKSRS). A compositionally biased stretch (acidic residues) spans 79 to 120 (EDSEDSEDSESDQDDDKSDNEQSDSELDDSESDDDETDDNES). One can recognise a KilA-N domain in the interval 151–255 (KFAIGKFGDF…IKIGEWIEEW (105 aa)).

This Acanthamoeba polyphaga (Amoeba) protein is Putative KilA-N domain-containing protein L32.